The chain runs to 121 residues: Small ribosomal subunit protein uS13 (121 aa).

The tract at residues 93 to 121 (RKGLPVRGQKTKTNARTRKGKRKTVGAKS) is disordered.

This sequence belongs to the universal ribosomal protein uS13 family. In terms of assembly, part of the 30S ribosomal subunit. Forms a loose heterodimer with protein S19. Forms two bridges to the 50S subunit in the 70S ribosome.

Located at the top of the head of the 30S subunit, it contacts several helices of the 16S rRNA. In the 70S ribosome it contacts the 23S rRNA (bridge B1a) and protein L5 of the 50S subunit (bridge B1b), connecting the 2 subunits; these bridges are implicated in subunit movement. Contacts the tRNAs in the A and P-sites. The sequence is that of Small ribosomal subunit protein uS13 from Campylobacter lari (strain RM2100 / D67 / ATCC BAA-1060).